Here is a 509-residue protein sequence, read N- to C-terminus: Protein disulfide-isomerase (509 aa).

Positions 1 to 18 (MLRRAVLCLALAVTAGWA) are cleaved as a signal peptide. The 117-residue stretch at 19–135 (WAAEEEDNVL…IVNWLKKRTG (117 aa)) folds into the Thioredoxin 1 domain. Residues Cys-54 and Cys-57 each act as nucleophile in the active site. Residues Cys-54 and Cys-57 are joined by a disulfide bond. An N6-succinyllysine mark is found at Lys-223 and Lys-272. Ser-332 and Ser-358 each carry phosphoserine. A Thioredoxin 2 domain is found at 347–476 (FLEGKIKPHL…FKKFLESGGQ (130 aa)). Residues Cys-398 and Cys-401 each act as nucleophile in the active site. A disulfide bridge links Cys-398 with Cys-401. The residue at position 428 (Ser-428) is a Phosphoserine. The tract at residues 471–509 (LESGGQDGAGDEDGLEDLEEAEEPDLEEDDDQKAVRDEL) is disordered. Positions 479–501 (AGDEDGLEDLEEAEEPDLEEDDD) are enriched in acidic residues. The Prevents secretion from ER signature appears at 506-509 (RDEL).

It belongs to the protein disulfide isomerase family. As to quaternary structure, heterodimer; heterodimerizes with the protein microsomal triglyceride transfer MTTP. Homodimer. Monomers and homotetramers may also occur. Interacts with P4HA2, forming a heterotetramer consisting of 2 alpha subunits (P4HA2) and 2 beta (P4HB), where P4HB plays the role of a structural subunit; this tetramer catalyzes the formation of 4-hydroxyproline in collagen. Also constitutes the structural subunit of the microsomal triacylglycerol transfer protein MTTP in mammalian cells. Stabilizes both enzymes and retain them in the ER without contributing to the catalytic activity. Binds UBQLN1. Interacts with ERO1B. Interacts with ILDR2. Interacts with ERN1/IRE1A (via N-terminus); the interaction is enhanced by phosphorylation of P4HB by FAM20C in response to endoplasmic reticulum stress and results in attenuation of ERN1 activity. Phosphorylation of Ser-358 by FAM20C is induced by endoplasmic reticulum stress and results in a functional switch from oxidoreductase to molecular chaperone. It also promotes interaction with ERN1.

Its subcellular location is the endoplasmic reticulum. The protein localises to the endoplasmic reticulum lumen. It is found in the melanosome. It localises to the cell membrane. The enzyme catalyses Catalyzes the rearrangement of -S-S- bonds in proteins.. In terms of biological role, this multifunctional protein catalyzes the formation, breakage and rearrangement of disulfide bonds. At the cell surface, seems to act as a reductase that cleaves disulfide bonds of proteins attached to the cell. May therefore cause structural modifications of exofacial proteins. Inside the cell, seems to form/rearrange disulfide bonds of nascent proteins. At high concentrations and following phosphorylation by FAM20C, functions as a chaperone that inhibits aggregation of misfolded proteins. At low concentrations, facilitates aggregation (anti-chaperone activity). May be involved with other chaperones in the structural modification of the TG precursor in hormone biogenesis. Also acts as a structural subunit of various enzymes such as prolyl 4-hydroxylase and microsomal triacylglycerol transfer protein MTTP. Receptor for LGALS9; the interaction retains P4HB at the cell surface of Th2 T helper cells, increasing disulfide reductase activity at the plasma membrane, altering the plasma membrane redox state and enhancing cell migration. This is Protein disulfide-isomerase (P4HB) from Oryctolagus cuniculus (Rabbit).